Here is a 357-residue protein sequence, read N- to C-terminus: N-acetyl-gamma-glutamyl-phosphate reductase (357 aa).

Residue Cys160 is part of the active site.

Belongs to the NAGSA dehydrogenase family. Type 1 subfamily.

It is found in the cytoplasm. The catalysed reaction is N-acetyl-L-glutamate 5-semialdehyde + phosphate + NADP(+) = N-acetyl-L-glutamyl 5-phosphate + NADPH + H(+). Its pathway is amino-acid biosynthesis; L-arginine biosynthesis; N(2)-acetyl-L-ornithine from L-glutamate: step 3/4. Functionally, catalyzes the NADPH-dependent reduction of N-acetyl-5-glutamyl phosphate to yield N-acetyl-L-glutamate 5-semialdehyde. This chain is N-acetyl-gamma-glutamyl-phosphate reductase, found in Synechococcus sp. (strain CC9605).